The primary structure comprises 303 residues: INGFGRIGRIVFRAAQKRSDIEIVAINDLLDAEYMAYMLKYDSTHGRFDGTVEVKDGHLVVNGKKIRVTAERDPANLKWDEVGVDVVAEATGIFLTDETARKHITAGAKKVVLTGPSKDNTPMFVRGANFDAYAGQDIVSNASCTTNCLAPLAKVINDNFGIVEGLMTTVHATTATQKTVDGPSHKDWRGGRGAAQNIIPSSTGAAKAVGKVLPELNGKLTGMAFRVPTPNVSVVDLTVRLEKAASYEEIKKAIKAASEGAMKGVLGYTEDDVVSTDFNGEVCTSVFDAKAGIALNDNFVKLV.

NAD(+) contacts are provided by residues 6 to 7, Asp-28, Arg-72, and Thr-114; that span reads RI. Residues 143–145, Thr-174, 203–204, and Arg-226 contribute to the D-glyceraldehyde 3-phosphate site; these read SCT and TG. Cys-144 serves as the catalytic Nucleophile.

Belongs to the glyceraldehyde-3-phosphate dehydrogenase family. In terms of assembly, homotetramer.

The protein resides in the cytoplasm. It catalyses the reaction D-glyceraldehyde 3-phosphate + phosphate + NAD(+) = (2R)-3-phospho-glyceroyl phosphate + NADH + H(+). It functions in the pathway carbohydrate degradation; glycolysis; pyruvate from D-glyceraldehyde 3-phosphate: step 1/5. Its function is as follows. Catalyzes the oxidative phosphorylation of glyceraldehyde 3-phosphate (G3P) to 1,3-bisphosphoglycerate (BPG) using the cofactor NAD. The first reaction step involves the formation of a hemiacetal intermediate between G3P and a cysteine residue, and this hemiacetal intermediate is then oxidized to a thioester, with concomitant reduction of NAD to NADH. The reduced NADH is then exchanged with the second NAD, and the thioester is attacked by a nucleophilic inorganic phosphate to produce BPG. The chain is Glyceraldehyde-3-phosphate dehydrogenase (gap) from Klebsiella pneumoniae.